A 124-amino-acid chain; its full sequence is Alpha-endosulfine (124 aa).

Residue serine 74 is modified to Phosphoserine; by GWL. Residues 99–124 (VTGDHIPTPQDLPQRKNTILTSKLAG) form a disordered region. The segment covering 113–124 (RKNTILTSKLAG) has biased composition (polar residues).

This sequence belongs to the endosulfine family. Phosphorylation at Ser-74 by gwl during mitosis is essential for interaction with ppp2r2d (PR55-delta) and subsequent inactivation of PP2A.

The protein localises to the cytoplasm. Functionally, protein phosphatase inhibitor that specifically inhibits protein phosphatase 2A (PP2A) during mitosis. When phosphorylated at Ser-67 during mitosis, specifically interacts with ppp2r2d (PR55-delta) and inhibits its activity, leading to inactivation of PP2A, an essential condition to keep cyclin-B1-CDK1 activity high during M phase. The sequence is that of Alpha-endosulfine (ensa) from Danio rerio (Zebrafish).